The chain runs to 645 residues: UPF0313 protein CLB_0243 (645 aa).

The region spanning 295–566 (AIKEVKFSIT…RMQRALLQFS (272 aa)) is the Radical SAM core domain. [4Fe-4S] cluster contacts are provided by cysteine 309, cysteine 313, and cysteine 316. Residues 598 to 645 (NKPYKKSHKKNNAKNNNNHYNKNNNYNKNKDISKKNKKNSLSKHKKRK) form a disordered region. Over residues 600-609 (PYKKSHKKNN) the composition is skewed to basic residues. The span at 610-624 (AKNNNNHYNKNNNYN) shows a compositional bias: low complexity. Residues 632-645 (KNKKNSLSKHKKRK) are compositionally biased toward basic residues.

The protein belongs to the UPF0313 family. [4Fe-4S] cluster serves as cofactor.

This Clostridium botulinum (strain ATCC 19397 / Type A) protein is UPF0313 protein CLB_0243.